Here is a 1943-residue protein sequence, read N- to C-terminus: Protocadherin-15 (1943 aa).

Residues 1–26 (MFLQFAVWKCLPHGILIASLLVVSWG) form the signal peptide. Over 27–1381 (QYDDDWQYED…GESLGYTEGA (1355 aa)) the chain is Extracellular. A disulfide bridge connects residues Cys-37 and Cys-125. Cadherin domains lie at 45-152 (PATI…SPTF), 153-270 (KHES…GPMF), 283-400 (RPLT…SPYF), 401-514 (TMPS…TPTF), 515-621 (PEIS…PPRF), 622-722 (PQLM…APVF), 724-824 (PYLP…SPVF), 825-931 (TNST…PPVF), 932-1040 (SKRI…IPRF), 1042-1149 (QEEY…PPVF), and 1150-1264 (QKKF…PPTL). Residues Asn-57, Asn-102, and Asn-206 are each glycosylated (N-linked (GlcNAc...) asparagine). 7 N-linked (GlcNAc...) asparagine glycosylation sites follow: Asn-424, Asn-564, Asn-667, Asn-729, Asn-773, Asn-826, and Asn-856. Residues Asn-1069, Asn-1089, and Asn-1180 are each glycosylated (N-linked (GlcNAc...) asparagine). The chain crosses the membrane as a helical span at residues 1382–1402 (LLALAFIIILCCIPAILVVLV). Topologically, residues 1403–1943 (SYRQFKVRQA…VQPHSQSTSL (541 aa)) are cytoplasmic. Disordered regions lie at residues 1425–1453 (PAAK…AHLY), 1475–1533 (GNNS…STHN), and 1714–1865 (ILNS…EPHR). Positions 1431–1449 (APVPAAPAPPPPPPPPPPG) are enriched in pro residues. Composition is skewed to basic and acidic residues over residues 1480–1489 (PEDRSSHRDG) and 1498–1509 (ESHEPAHVEGPL). 2 stretches are compositionally biased toward pro residues: residues 1742 to 1760 (PHPP…PRPP) and 1769 to 1779 (PLSPPNPPPPQ). Residues 1784–1795 (SLPISTPPTSSL) show a composition bias toward low complexity. Positions 1796–1821 (PLPPPLSLPPPPRPPAPRLFPQPPST) are enriched in pro residues. Low complexity predominate over residues 1822-1834 (SIPSTDSISAPAA). The segment covering 1846–1858 (TTSTTQPPASNPQ) has biased composition (polar residues).

As to quaternary structure, antiparallel heterodimer with CDH23. Found in a complex with TMIE and LHFPL5. Interacts with LHFPL5/TMHS; this interaction is required for efficient localization to hair bundles. Interacts with MYO7A. Interacts with USH1G; this interaction may recruit USH1G to the plasma membrane. Interacts with TOMT. Isoforms CD1 and CD3 interact with TMC1 (via N-terminus) and TMC2 (via N-terminus). Interacts with PIEZO1. In terms of tissue distribution, expressed in brain and sensory epithelium of the developing inner ear. Expressed in the retina, in the photoreceptor inner segments, the outer plexiform layer, the inner nuclei layer and the ganglion cell layer and, more diffusely in the inner plexiform layer (at protein level). Not detected in the retinal pigment epithelium (at protein level). Expressed in the spleen, dorsal root ganglion, dorsal aspect of neural tube, floor plate and ependymal cells adjacent to the neural canal.

It is found in the cell membrane. Its subcellular location is the secreted. Its function is as follows. Calcium-dependent cell-adhesion protein. Required for inner ear neuroepithelial cell elaboration and cochlear function. Probably involved in the maintenance of normal retinal function. The sequence is that of Protocadherin-15 (Pcdh15) from Mus musculus (Mouse).